The sequence spans 460 residues: Cysteine--tRNA ligase (460 aa).

Residue Cys-28 coordinates Zn(2+). The 'HIGH' region signature appears at 30–40; sequence NTVYDFCHIGH. Residues Cys-209, His-234, and Glu-238 each contribute to the Zn(2+) site. The short motif at 266–270 is the 'KMSKS' region element; it reads KMSKS. Lys-269 is an ATP binding site.

Belongs to the class-I aminoacyl-tRNA synthetase family. As to quaternary structure, monomer. Zn(2+) serves as cofactor.

The protein resides in the cytoplasm. The enzyme catalyses tRNA(Cys) + L-cysteine + ATP = L-cysteinyl-tRNA(Cys) + AMP + diphosphate. The chain is Cysteine--tRNA ligase from Marinomonas sp. (strain MWYL1).